We begin with the raw amino-acid sequence, 153 residues long: UPF0756 membrane protein lwe1581 (153 aa).

Helical transmembrane passes span 6-26, 54-74, 80-100, and 117-137; these read MLFLLLFLLLGLIAKNNSLII, WGVTIITVAILIPIATGQIGF, SFKSAAGWIGLGAGIAVSILA, and LVFGTILAVVLFRGIAAGPVI.

The protein belongs to the UPF0756 family.

The protein resides in the cell membrane. This chain is UPF0756 membrane protein lwe1581, found in Listeria welshimeri serovar 6b (strain ATCC 35897 / DSM 20650 / CCUG 15529 / CIP 8149 / NCTC 11857 / SLCC 5334 / V8).